The chain runs to 93 residues: Small ribosomal subunit protein bS6 (93 aa).

It belongs to the bacterial ribosomal protein bS6 family.

In terms of biological role, binds together with bS18 to 16S ribosomal RNA. The sequence is that of Small ribosomal subunit protein bS6 (rpsF) from Treponema pallidum (strain Nichols).